A 141-amino-acid chain; its full sequence is uncharacterized protein (141 aa).

The next 2 helical transmembrane spans lie at 64-84 (IAAV…IEAI) and 112-132 (IVGS…LVLI).

The protein localises to the cell membrane. This is an uncharacterized protein from Sinorhizobium fredii (strain NBRC 101917 / NGR234).